The chain runs to 925 residues: Probable replication restart protein PriA (925 aa).

Positions 645, 648, 654, 657, 672, 675, 685, and 688 each coordinate Zn(2+).

This sequence belongs to the helicase family. PriA subfamily. As to quaternary structure, interacts with DnaB (DR_0549). Component of the replication restart primosome. It depends on Zn(2+) as a cofactor.

Its function is as follows. Initiates the restart of stalled replication forks, which reloads the replicative helicase on sites other than the origin of replication. Recognizes abandoned replication forks and remodels them to uncover a helicase loading site. Promotes assembly of the primosome at these replication forks. Recognizes and binds DNA at stalled replication forks, also binds single-stranded (ss)DNA. The protein is Probable replication restart protein PriA of Deinococcus radiodurans (strain ATCC 13939 / DSM 20539 / JCM 16871 / CCUG 27074 / LMG 4051 / NBRC 15346 / NCIMB 9279 / VKM B-1422 / R1).